Reading from the N-terminus, the 519-residue chain is Probable FAD synthase (519 aa).

The molybdenum cofactor biosynthesis protein-like stretch occupies residues 17-108 (AILVIGDEIL…TDQMQFSDEI (92 aa)). Residues 328–485 (QIALSFNGGK…SLGGRDNTVK (158 aa)) form an FAD synthase region.

It in the N-terminal section; belongs to the MoaB/Mog family. This sequence in the C-terminal section; belongs to the PAPS reductase family. FAD1 subfamily. Mg(2+) serves as cofactor.

It catalyses the reaction FMN + ATP + H(+) = FAD + diphosphate. The protein operates within cofactor biosynthesis; FAD biosynthesis; FAD from FMN: step 1/1. In terms of biological role, catalyzes the adenylation of flavin mononucleotide (FMN) to form flavin adenine dinucleotide (FAD) coenzyme. The sequence is that of Probable FAD synthase from Caenorhabditis elegans.